The chain runs to 370 residues: tRNA-specific 2-thiouridylase MnmA (370 aa).

ATP-binding positions include 11–18 (GMSGGVDS) and Met-37. The interaction with target base in tRNA stretch occupies residues 97-99 (NPD). The Nucleophile role is filled by Cys-102. Cys-102 and Cys-199 are joined by a disulfide. Position 126 (Gly-126) interacts with ATP. Residues 149–151 (KDQ) are interaction with tRNA. Cys-199 (cysteine persulfide intermediate) is an active-site residue. The tract at residues 307–308 (RY) is interaction with tRNA.

Belongs to the MnmA/TRMU family.

Its subcellular location is the cytoplasm. The enzyme catalyses S-sulfanyl-L-cysteinyl-[protein] + uridine(34) in tRNA + AH2 + ATP = 2-thiouridine(34) in tRNA + L-cysteinyl-[protein] + A + AMP + diphosphate + H(+). Catalyzes the 2-thiolation of uridine at the wobble position (U34) of tRNA, leading to the formation of s(2)U34. In Staphylococcus haemolyticus (strain JCSC1435), this protein is tRNA-specific 2-thiouridylase MnmA.